Consider the following 192-residue polypeptide: Imidazole glycerol phosphate synthase subunit HisH (192 aa).

The Glutamine amidotransferase type-1 domain maps to 1–192; it reads MIAIIDYGLG…QALKGGFIND (192 aa). The Nucleophile role is filled by Cys77. Active-site residues include His169 and Glu171.

Heterodimer of HisH and HisF.

It is found in the cytoplasm. It carries out the reaction 5-[(5-phospho-1-deoxy-D-ribulos-1-ylimino)methylamino]-1-(5-phospho-beta-D-ribosyl)imidazole-4-carboxamide + L-glutamine = D-erythro-1-(imidazol-4-yl)glycerol 3-phosphate + 5-amino-1-(5-phospho-beta-D-ribosyl)imidazole-4-carboxamide + L-glutamate + H(+). It catalyses the reaction L-glutamine + H2O = L-glutamate + NH4(+). It participates in amino-acid biosynthesis; L-histidine biosynthesis; L-histidine from 5-phospho-alpha-D-ribose 1-diphosphate: step 5/9. IGPS catalyzes the conversion of PRFAR and glutamine to IGP, AICAR and glutamate. The HisH subunit catalyzes the hydrolysis of glutamine to glutamate and ammonia as part of the synthesis of IGP and AICAR. The resulting ammonia molecule is channeled to the active site of HisF. This is Imidazole glycerol phosphate synthase subunit HisH from Staphylococcus epidermidis (strain ATCC 12228 / FDA PCI 1200).